The following is a 216-amino-acid chain: Large ribosomal subunit protein bL25 (216 aa).

Disordered regions lie at residues 1–21 and 192–216; these read MAET…GAVR and SADN…GKED. Basic and acidic residues predominate over residues 195–216; it reads NEAKTEEAGEDKSEEKSSGKED.

This sequence belongs to the bacterial ribosomal protein bL25 family. CTC subfamily. Part of the 50S ribosomal subunit; part of the 5S rRNA/L5/L18/L25 subcomplex. Contacts the 5S rRNA. Binds to the 5S rRNA independently of L5 and L18.

This is one of the proteins that binds to the 5S RNA in the ribosome where it forms part of the central protuberance. This Parvibaculum lavamentivorans (strain DS-1 / DSM 13023 / NCIMB 13966) protein is Large ribosomal subunit protein bL25.